The following is a 273-amino-acid chain: Large ribosomal subunit protein uL2cz/uL2cy (273 aa).

Disordered stretches follow at residues 1-24 (MAIH…QAKS) and 224-254 (NPVD…PALG).

The protein belongs to the universal ribosomal protein uL2 family. Part of the 50S ribosomal subunit.

The protein resides in the plastid. It is found in the chloroplast. The sequence is that of Large ribosomal subunit protein uL2cz/uL2cy (rpl2-A) from Nymphaea alba (White water-lily).